The primary structure comprises 275 residues: NH(3)-dependent NAD(+) synthetase (275 aa).

50 to 57 contacts ATP; the sequence is GISGGVDS. Aspartate 56 lines the Mg(2+) pocket. Arginine 147 contacts deamido-NAD(+). Residue threonine 167 coordinates ATP. Mg(2+) is bound at residue glutamate 172. Deamido-NAD(+) is bound by residues lysine 180 and aspartate 187. ATP is bound by residues lysine 196 and threonine 218. 267-268 contacts deamido-NAD(+); the sequence is HK.

The protein belongs to the NAD synthetase family. In terms of assembly, homodimer.

The enzyme catalyses deamido-NAD(+) + NH4(+) + ATP = AMP + diphosphate + NAD(+) + H(+). Its pathway is cofactor biosynthesis; NAD(+) biosynthesis; NAD(+) from deamido-NAD(+) (ammonia route): step 1/1. Functionally, catalyzes the ATP-dependent amidation of deamido-NAD to form NAD. Uses ammonia as a nitrogen source. The protein is NH(3)-dependent NAD(+) synthetase of Pseudomonas putida (strain GB-1).